A 426-amino-acid polypeptide reads, in one-letter code: UPF0329 protein ECU06_0040 (426 aa).

Residues 136–172 show a composition bias toward basic and acidic residues; sequence RQRKREEETERSVKELVGDEEKAKSKEEKAKSKEEKA. Positions 136-230 are disordered; it reads RQRKREEETE…GGKKKSKGGR (95 aa). The segment covering 220 to 230 has biased composition (basic residues); that stretch reads KGGKKKSKGGR.

It belongs to the UPF0329 family.

This chain is UPF0329 protein ECU06_0040, found in Encephalitozoon cuniculi (strain GB-M1) (Microsporidian parasite).